The following is a 131-amino-acid chain: Large ribosomal subunit protein bL17 (131 aa).

This sequence belongs to the bacterial ribosomal protein bL17 family. Part of the 50S ribosomal subunit. Contacts protein L32.

The chain is Large ribosomal subunit protein bL17 from Hamiltonella defensa subsp. Acyrthosiphon pisum (strain 5AT).